The chain runs to 98 residues: Large ribosomal subunit protein uL23 (98 aa).

Belongs to the universal ribosomal protein uL23 family. Part of the 50S ribosomal subunit. Contacts protein L29, and trigger factor when it is bound to the ribosome.

In terms of biological role, one of the early assembly proteins it binds 23S rRNA. One of the proteins that surrounds the polypeptide exit tunnel on the outside of the ribosome. Forms the main docking site for trigger factor binding to the ribosome. In Roseobacter denitrificans (strain ATCC 33942 / OCh 114) (Erythrobacter sp. (strain OCh 114)), this protein is Large ribosomal subunit protein uL23.